Reading from the N-terminus, the 62-residue chain is Photosystem II reaction center protein Z (62 aa).

The next 2 helical transmembrane spans lie at 8–28 (LVLLLITLSTILVVGVPVVLA) and 41–61 (YTGAGLWTGLVIVTSLVNSLV).

The protein belongs to the PsbZ family. In terms of assembly, PSII is composed of 1 copy each of membrane proteins PsbA, PsbB, PsbC, PsbD, PsbE, PsbF, PsbH, PsbI, PsbJ, PsbK, PsbL, PsbM, PsbT, PsbX, PsbY, PsbZ, Psb30/Ycf12, at least 3 peripheral proteins of the oxygen-evolving complex and a large number of cofactors. It forms dimeric complexes.

It localises to the plastid. The protein resides in the chloroplast thylakoid membrane. Its function is as follows. May control the interaction of photosystem II (PSII) cores with the light-harvesting antenna, regulates electron flow through the 2 photosystem reaction centers. PSII is a light-driven water plastoquinone oxidoreductase, using light energy to abstract electrons from H(2)O, generating a proton gradient subsequently used for ATP formation. This Porphyra purpurea (Red seaweed) protein is Photosystem II reaction center protein Z.